We begin with the raw amino-acid sequence, 527 residues long: Sensory neuron membrane protein 1 (527 aa).

Over 1–10 (MQLQKPLKIG) the chain is Cytoplasmic. Residues 11–31 (LGMMGAGLFGIIFGWVLFPVI) form a helical membrane-spanning segment. Over 32–456 (LKSQLKKEMA…LKNQLFIPKR (425 aa)) the chain is Extracellular. N-linked (GlcNAc...) asparagine glycans are attached at residues asparagine 67 and asparagine 229. 3 disulfide bridges follow: cysteine 268–cysteine 333, cysteine 297–cysteine 352, and cysteine 335–cysteine 341. Asparagine 440 is a glycosylation site (N-linked (GlcNAc...) asparagine). Residues 457–477 (IVSVVKWLLAGVGFVGLVGSL) traverse the membrane as a helical segment. At 478 to 527 (VYQFKGKMINFALSPSSAQVTKVNPEINQQNQPKDISIIGESQNPPKVDM) the chain is on the cytoplasmic side.

It belongs to the CD36 family. In terms of tissue distribution, detected in both male and female antennal tissues. Expression is two to three fold higher in male compared to female antenna.

The protein resides in the cell membrane. Plays an olfactory role that is not restricted to pheromone sensitivity. This Ostrinia furnacalis (Asian corn borer) protein is Sensory neuron membrane protein 1.